Consider the following 216-residue polypeptide: Nucleoid occlusion factor SlmA (216 aa).

Residues 1–23 are disordered; that stretch reads MAEQLTLDSIEPEPEKQSAKIEK. Over residues 13 to 23 the composition is skewed to basic and acidic residues; it reads EPEKQSAKIEK. The 61-residue stretch at 28–88 folds into the HTH tetR-type domain; sequence ERRQQVLTVL…ALIENIESSL (61 aa). The segment at residues 51 to 70 is a DNA-binding region (H-T-H motif); it reads TTARLAKEVGVSEAALYRYF.

The protein belongs to the nucleoid occlusion factor SlmA family. In terms of assembly, homodimer. Interacts with FtsZ.

The protein resides in the cytoplasm. The protein localises to the nucleoid. Required for nucleoid occlusion (NO) phenomenon, which prevents Z-ring formation and cell division over the nucleoid. Acts as a DNA-associated cell division inhibitor that binds simultaneously chromosomal DNA and FtsZ, and disrupts the assembly of FtsZ polymers. SlmA-DNA-binding sequences (SBS) are dispersed on non-Ter regions of the chromosome, preventing FtsZ polymerization at these regions. The protein is Nucleoid occlusion factor SlmA of Mannheimia succiniciproducens (strain KCTC 0769BP / MBEL55E).